A 333-amino-acid polypeptide reads, in one-letter code: Glycerol-3-phosphate dehydrogenase [NAD(P)+] (333 aa).

The NADPH site is built by serine 10, tryptophan 11, histidine 31, arginine 32, and lysine 105. The sn-glycerol 3-phosphate site is built by lysine 105, glycine 136, and serine 138. Position 140 (alanine 140) interacts with NADPH. Residues lysine 191, aspartate 244, serine 254, arginine 255, and asparagine 256 each contribute to the sn-glycerol 3-phosphate site. Lysine 191 acts as the Proton acceptor in catalysis. An NADPH-binding site is contributed by arginine 255. NADPH is bound by residues isoleucine 279 and glutamate 281.

The protein belongs to the NAD-dependent glycerol-3-phosphate dehydrogenase family.

The protein localises to the cytoplasm. It carries out the reaction sn-glycerol 3-phosphate + NAD(+) = dihydroxyacetone phosphate + NADH + H(+). The catalysed reaction is sn-glycerol 3-phosphate + NADP(+) = dihydroxyacetone phosphate + NADPH + H(+). It functions in the pathway membrane lipid metabolism; glycerophospholipid metabolism. In terms of biological role, catalyzes the reduction of the glycolytic intermediate dihydroxyacetone phosphate (DHAP) to sn-glycerol 3-phosphate (G3P), the key precursor for phospholipid synthesis. This is Glycerol-3-phosphate dehydrogenase [NAD(P)+] from Chlorobium chlorochromatii (strain CaD3).